Here is a 279-residue protein sequence, read N- to C-terminus: 3-methyl-2-oxobutanoate hydroxymethyltransferase (279 aa).

The Mg(2+) site is built by Asp44 and Asp83. 3-methyl-2-oxobutanoate is bound by residues 44-45 (DS), Asp83, and Lys112. Glu114 provides a ligand contact to Mg(2+). The active-site Proton acceptor is the Glu180.

This sequence belongs to the PanB family. Homodecamer; pentamer of dimers. Mg(2+) serves as cofactor.

Its subcellular location is the cytoplasm. The enzyme catalyses 3-methyl-2-oxobutanoate + (6R)-5,10-methylene-5,6,7,8-tetrahydrofolate + H2O = 2-dehydropantoate + (6S)-5,6,7,8-tetrahydrofolate. The protein operates within cofactor biosynthesis; (R)-pantothenate biosynthesis; (R)-pantoate from 3-methyl-2-oxobutanoate: step 1/2. Functionally, catalyzes the reversible reaction in which hydroxymethyl group from 5,10-methylenetetrahydrofolate is transferred onto alpha-ketoisovalerate to form ketopantoate. This Chloroflexus aggregans (strain MD-66 / DSM 9485) protein is 3-methyl-2-oxobutanoate hydroxymethyltransferase.